Reading from the N-terminus, the 319-residue chain is Probable cytochrome c oxidase subunit 2 (319 aa).

Residues 1-33 (MSPNGSDRSPRRPMRRKLLQALTAGLVLATATG) form the signal peptide. The next 2 membrane-spanning stretches (helical) occupy residues 63–83 (WAAALATGVLVWGLILWATIF) and 101–121 (MPIEALYTVVPLIIVSVLFYF). Cu cation-binding residues include His227, Cys262, Cys266, and His270.

This sequence belongs to the cytochrome c oxidase subunit 2 family. It depends on Cu cation as a cofactor. Requires heme as cofactor.

Its subcellular location is the cell membrane. It carries out the reaction 4 Fe(II)-[cytochrome c] + O2 + 8 H(+)(in) = 4 Fe(III)-[cytochrome c] + 2 H2O + 4 H(+)(out). Functionally, subunits I and II form the functional core of the enzyme complex. Electrons originating in cytochrome c are transferred via heme a and Cu(A) to the binuclear center formed by heme a3 and Cu(B). The protein is Probable cytochrome c oxidase subunit 2 (ctaC) of Streptomyces avermitilis (strain ATCC 31267 / DSM 46492 / JCM 5070 / NBRC 14893 / NCIMB 12804 / NRRL 8165 / MA-4680).